The sequence spans 329 residues: Acetyl-coenzyme A carboxylase carboxyl transferase subunit alpha (329 aa).

Residues 40-294 enclose the CoA carboxyltransferase C-terminal domain; sequence QLETLAARRR…KTSILRHLTE (255 aa).

This sequence belongs to the AccA family. In terms of assembly, acetyl-CoA carboxylase is a heterohexamer composed of biotin carboxyl carrier protein (AccB), biotin carboxylase (AccC) and two subunits each of ACCase subunit alpha (AccA) and ACCase subunit beta (AccD).

It localises to the cytoplasm. The enzyme catalyses N(6)-carboxybiotinyl-L-lysyl-[protein] + acetyl-CoA = N(6)-biotinyl-L-lysyl-[protein] + malonyl-CoA. It functions in the pathway lipid metabolism; malonyl-CoA biosynthesis; malonyl-CoA from acetyl-CoA: step 1/1. Functionally, component of the acetyl coenzyme A carboxylase (ACC) complex. First, biotin carboxylase catalyzes the carboxylation of biotin on its carrier protein (BCCP) and then the CO(2) group is transferred by the carboxyltransferase to acetyl-CoA to form malonyl-CoA. The chain is Acetyl-coenzyme A carboxylase carboxyl transferase subunit alpha from Prochlorococcus marinus (strain SARG / CCMP1375 / SS120).